Consider the following 250-residue polypeptide: Gamma-secretase subunit APH1-like (250 aa).

7 helical membrane-spanning segments follow: residues 5–25 (AGIG…VSVI), 29–49 (PFLI…LIIL), 57–77 (LPLK…SVCF), 116–136 (IALA…CLSL), 157–177 (FLIS…SMVI), 191–211 (IIVP…FASE), and 212–232 (GCVI…VHCG).

This sequence belongs to the APH-1 family. As to quaternary structure, probable component of the gamma-secretase complex, a complex composed of a presenilin homodimer, nicastrin, APH1 and PEN2.

It is found in the membrane. In terms of biological role, probable subunit of the gamma-secretase complex, an endoprotease complex that catalyzes the intramembrane cleavage of integral proteins such as Notch receptors. The sequence is that of Gamma-secretase subunit APH1-like from Arabidopsis thaliana (Mouse-ear cress).